The sequence spans 185 residues: Ribosome-recycling factor (185 aa).

Belongs to the RRF family.

The protein resides in the cytoplasm. Its function is as follows. Responsible for the release of ribosomes from messenger RNA at the termination of protein biosynthesis. May increase the efficiency of translation by recycling ribosomes from one round of translation to another. This Pseudoalteromonas atlantica (strain T6c / ATCC BAA-1087) protein is Ribosome-recycling factor.